A 343-amino-acid chain; its full sequence is Protein FAM50A-B (343 aa).

Disordered stretches follow at residues M1–R25 and E125–N181. Acidic residues predominate over residues E125–Y142. Over residues P172–N181 the composition is skewed to basic and acidic residues.

Belongs to the FAM50 family.

The protein resides in the nucleus. Probably involved in the regulation of pre-mRNA splicing. The polypeptide is Protein FAM50A-B (fam50a-b) (Xenopus laevis (African clawed frog)).